The following is a 93-amino-acid chain: Photosystem I iron-sulfur center (93 aa).

2 4Fe-4S ferredoxin-type domains span residues 13-43 (KDHE…MVPS) and 50-80 (QVVT…IRVY). [4Fe-4S] cluster-binding residues include Cys-23, Cys-26, Cys-29, Cys-33, Cys-60, Cys-63, Cys-66, and Cys-70.

The eukaryotic PSI reaction center is composed of at least 11 subunits. [4Fe-4S] cluster is required as a cofactor.

The protein localises to the plastid. Its subcellular location is the chloroplast thylakoid membrane. It catalyses the reaction reduced [plastocyanin] + hnu + oxidized [2Fe-2S]-[ferredoxin] = oxidized [plastocyanin] + reduced [2Fe-2S]-[ferredoxin]. Its function is as follows. Apoprotein for the two 4Fe-4S centers FA and FB of photosystem I (PSI); essential for photochemical activity. FB is the terminal electron acceptor of PSI, donating electrons to ferredoxin. The C-terminus interacts with PsaA/B/D and helps assemble the protein into the PSI complex. Required for binding of PsaD and PsaE to PSI. PSI is a plastocyanin-ferredoxin oxidoreductase, converting photonic excitation into a charge separation, which transfers an electron from the donor P700 chlorophyll pair to the spectroscopically characterized acceptors A0, A1, FX, FA and FB in turn. The chain is Photosystem I iron-sulfur center from Bigelowiella natans (Pedinomonas minutissima).